The sequence spans 623 residues: Activator of C kinase protein 1 (623 aa).

The disordered stretch occupies residues 141-230 (KESLGSPAVQ…GSSGGEDKLS (90 aa)). Residues 152–161 (ASISSGNRIS) show a composition bias toward polar residues. Positions 176–193 (SESRILQEKVYRTEEKAP) are enriched in basic and acidic residues. Glycyl lysine isopeptide (Lys-Gly) (interchain with G-Cter in ubiquitin) cross-links involve residues Lys-184 and Lys-191. Residues 206 to 215 (KINQPPTGSA) show a composition bias toward polar residues. 4 Sel1-like repeats span residues 318 to 361 (PPAM…KLNN), 408 to 444 (SACM…QKGD), 495 to 531 (PLAQ…AAQP), and 576 to 611 (ARTE…RMGF).

The protein is Activator of C kinase protein 1 (ACK1) of Saccharomyces cerevisiae (strain ATCC 204508 / S288c) (Baker's yeast).